A 402-amino-acid chain; its full sequence is Septin CDC11 (402 aa).

Methionine 1 carries the N-acetylmethionine modification. Serine 4 carries the phosphoserine modification. A Basic motif motif is present at residues 14–21; the sequence is RKRKTLKK. One can recognise a Septin-type G domain in the interval 21-307; that stretch reads KSINFSIMII…ENYRTEALSG (287 aa). The interval 31–38 is G1 motif; that stretch reads GESGSGRS. 31–38 is a GTP binding site; sequence GESGSGRS. Positions 89-92 are G3 motif; sequence DTPN. The segment at 171–174 is G4 motif; that stretch reads SKAD. GTP contacts are provided by residues 172–180 and glycine 233; that span reads KADSLTPKE. Residues 318 to 376 adopt a coiled-coil conformation; sequence AKQEISESDYLMKEEQIKLEEERLRKFEERVHQDLINKRKELLERENELKEIEKRLLAE. Position 394 is a phosphoserine; by CDC28 (serine 394). Serine 395 carries the post-translational modification Phosphoserine; by GIN4.

This sequence belongs to the TRAFAC class TrmE-Era-EngA-EngB-Septin-like GTPase superfamily. Septin GTPase family. In terms of assembly, component of the septin complex which consists of CDC3, CDC10, CDC11, CDC12 and probably SEP7. The purified septin complex appeared to have a stoichiometry of 2 CDC3, 1 to 2 CDC10, 1 CDC11, 2 CDC12, and 1 or none SEP7 subunit. Interacts with HSL1. In terms of processing, hyphal induction causes immediate phosphorylation at Ser-395 by GIN4 and at Ser-394 by CDC28-CCN1. GIN4 phosphorylation at Ser-395 primes CDC11 for further phosphorylation by CDC28-CCN1. CDC28-HGC1 then maintains CDC11 phosphorylation throughout hyphal growth. Ser-4 is also phosphorylated in yeast cells but not hyphal cells. Post-translationally, met-1 is acetylated.

The protein resides in the bud neck. Its function is as follows. Septins are GTPases involved in cytokinesis that assemble early in the cell cycle as a patch at the incipient bud site and form a ring before bud emergence, which transforms into an hour-glass shaped collar of cortical filaments that spans both sides of the mother-bud neck. This collar persists until just before cytokinesis, when it splits into two rings that occupy opposite sides of the neck. The septins at the bud neck serve as a structural scaffold that recruits different components involved in diverse processes at specific stages during the cell cycle. Many proteins bind asymmetrically to the septin collar. The septin assembly is regulated by protein kinase GIN4. Septins are also involved in cell morphogenesis, chlamydospores morphogenesis, bud site selection, chitin deposition, cell cycle regulation, cell compartmentalization, and spore wall formation. CDC11 is required for the correct localization of SEC3 at bud tips and bud necks. Plays a key role in invasive growth and virulence. This is Septin CDC11 (CDC11) from Candida albicans (strain SC5314 / ATCC MYA-2876) (Yeast).